The chain runs to 147 residues: UPF0306 protein YhbP (147 aa).

Belongs to the UPF0306 family.

This Escherichia coli O17:K52:H18 (strain UMN026 / ExPEC) protein is UPF0306 protein YhbP.